Consider the following 426-residue polypeptide: MSTEAPVLGILCGGGPAPGLNGVIAGATLYALRLGWKVIGFMEGFKYLCTGDVDVVKAHTIDLTYDIVSRIHFQGGTIIQTSRANPRKSPELQENVRKCLRALKVRYFLTIGGDDTASSAVSVASGMNGNEISVISCPKTIDNDLPLPADQSTFGFHTARSLGMEIIRNLMVDSKSAPRWFLVEAMGRSAGHLALGMAEASGAHLCLIPEEFKQDEIEFEDVVELVEATILKRLAYGKNYGVCVLAEGLVSKMSKKALYKLFGNREPPTDPHGHILLDDAELARSLSEELLKRLGNLGIRITPKKIGYELRCADPVAFDAVYTRELGYGAIDAFLNGHSAALIVRENGQVKPVQFKDLLDPATGRVRTRLVDVTSQSFKVARVYMWRMSKKDYENKDLVARVAAAGKMTPEAFTEKFAHLTDVVVE.

Gly-15 provides a ligand contact to diphosphate. Mg(2+) is bound at residue Asp-114. Residues 140–142 (TID), 186–188 (MGR), Glu-247, and 308–311 (YELR) each bind substrate. The active-site Proton acceptor is Asp-142.

The protein belongs to the phosphofructokinase type A (PFKA) family. PPi-dependent PFK group II subfamily. Clade 'Short' sub-subfamily. In terms of assembly, homotetramer. Requires Mg(2+) as cofactor.

The protein localises to the cytoplasm. The catalysed reaction is beta-D-fructose 6-phosphate + diphosphate = beta-D-fructose 1,6-bisphosphate + phosphate + H(+). Its pathway is carbohydrate degradation; glycolysis; D-glyceraldehyde 3-phosphate and glycerone phosphate from D-glucose: step 3/4. With respect to regulation, non-allosteric. In terms of biological role, catalyzes the phosphorylation of D-fructose 6-phosphate, the first committing step of glycolysis. Uses inorganic phosphate (PPi) as phosphoryl donor instead of ATP like common ATP-dependent phosphofructokinases (ATP-PFKs), which renders the reaction reversible, and can thus function both in glycolysis and gluconeogenesis. Consistently, PPi-PFK can replace the enzymes of both the forward (ATP-PFK) and reverse (fructose-bisphosphatase (FBPase)) reactions. The chain is Pyrophosphate--fructose 6-phosphate 1-phosphotransferase 1 (Pfk1) from Trichomonas vaginalis (strain ATCC PRA-98 / G3).